A 349-amino-acid polypeptide reads, in one-letter code: tRNA pseudouridine synthase D (349 aa).

F26 provides a ligand contact to substrate. D79 (nucleophile) is an active-site residue. A substrate-binding site is contributed by N128. The TRUD domain occupies 154–303 (GVPNYFGSQR…VDAARRAMLV (150 aa)). F329 is a substrate binding site.

It belongs to the pseudouridine synthase TruD family.

It carries out the reaction uridine(13) in tRNA = pseudouridine(13) in tRNA. Responsible for synthesis of pseudouridine from uracil-13 in transfer RNAs. This chain is tRNA pseudouridine synthase D, found in Erwinia tasmaniensis (strain DSM 17950 / CFBP 7177 / CIP 109463 / NCPPB 4357 / Et1/99).